The following is a 595-amino-acid chain: Phytoene desaturase (595 aa).

A signal peptide spans 1–23 (MAETQRPRSAIIVGAGAGGIAVA). The helical transmembrane segment at 574–594 (SQRAFPLLVALMGVLYFLLFV) threads the bilayer.

The protein belongs to the carotenoid/retinoid oxidoreductase family. The cofactor is NAD(+).

The protein localises to the membrane. The catalysed reaction is 15-cis-phytoene + A = all-trans-phytofluene + AH2. It catalyses the reaction all-trans-phytofluene + A = all-trans-zeta-carotene + AH2. The enzyme catalyses all-trans-zeta-carotene + A = all-trans-neurosporene + AH2. It carries out the reaction all-trans-neurosporene + A = all-trans-lycopene + AH2. The catalysed reaction is all-trans-lycopene + A = all-trans-3,4-didehydrolycopene + AH2. It participates in carotenoid biosynthesis; lycopene biosynthesis. Its function is as follows. Phytoene desaturase involved in the carotenoid biosynthesis pathway. Converts phytoene into 3,4-didehydrolycopene via the intermediates phytofluene, zeta-carotene, neurosporene and lycopene, by introducing up to five double bonds into phytoene. Is also able to desaturate 1-hydroxyneurosporene into 1-hydroxylycopene and 1-hydroxylycopene into 1-hydroxy-3,4-didehydrolycopene. Gamma-carotene and 1,19-dihydroxylycopene are not accepted as substrates. Neurosporaxanthin is synthesized from geranyl-geranyl pyrophosphate (GGPP) through several enzymatic activities. Phytoene synthase activity performed by the bifunctional enzyme al-2 first produces phytoene from geranyl-geranyl pyrophosphate (GGPP). The phytoene dehydrogenase al-1 then introduces 5 desaturations to lead to 3,4-didehydrolycopene via the intermediates phytofluene, zeta-carotene, neurosporene and lycopene. Al-2 cyclase activity then converts 3,4-didehydrolycopene into torulene. Al-2 can also convet lycopene into gamma-carotene which in turn is converted to beta-carotene by an additional al-2 cyclization reaction. Torulene is the substrate of the dioxidase cao-2 that breaks the molecule, removing five carbon atoms to yield beta-apo-4'-carotenal, whereas the aldehyde dehydrogenase ylo-1 mediates the last step by converting beta-apo-4'-carotenal into neurosporaxanthin. The protein is Phytoene desaturase of Neurospora crassa (strain ATCC 24698 / 74-OR23-1A / CBS 708.71 / DSM 1257 / FGSC 987).